The sequence spans 161 residues: MQLSALIEKTVVGMGYELVNFEQAARGLVRVYIDFTPEDADKGSITVEDCEKVTHQLLHVLTVENANYERLEVSSPGLDRPLKKLSDYVRFAGAEALVKLRLPMPNAANRKSFQGILQEPVGETLALEFEGNEGPAKLEFTLADVDKAHLVPQVNFRSRKA.

This sequence belongs to the RimP family.

It localises to the cytoplasm. Functionally, required for maturation of 30S ribosomal subunits. The chain is Ribosome maturation factor RimP from Herminiimonas arsenicoxydans.